Consider the following 441-residue polypeptide: Arginine biosynthesis bifunctional protein ArgJ, mitochondrial (441 aa).

Residues 1-8 constitute a mitochondrion transit peptide; it reads MRISSTLL. Substrate is bound by residues Thr177, Lys204, Thr215, Glu301, Asn436, and Ser441. Thr215 (nucleophile) is an active-site residue.

The protein belongs to the ArgJ family. Heterodimer of an alpha and a beta chain. Post-translationally, the alpha and beta chains are autoproteolytically processed from a single precursor protein within the mitochondrion.

It localises to the mitochondrion matrix. It catalyses the reaction N(2)-acetyl-L-ornithine + L-glutamate = N-acetyl-L-glutamate + L-ornithine. It carries out the reaction L-glutamate + acetyl-CoA = N-acetyl-L-glutamate + CoA + H(+). It functions in the pathway amino-acid biosynthesis; L-arginine biosynthesis; L-ornithine and N-acetyl-L-glutamate from L-glutamate and N(2)-acetyl-L-ornithine (cyclic): step 1/1. The protein operates within amino-acid biosynthesis; L-arginine biosynthesis; N(2)-acetyl-L-ornithine from L-glutamate: step 1/4. Inhibited by ornithine. Catalyzes two activities which are involved in the cyclic version of arginine biosynthesis: the synthesis of acetylglutamate from glutamate and acetyl-CoA, and of ornithine by transacetylation between acetylornithine and glutamate. The sequence is that of Arginine biosynthesis bifunctional protein ArgJ, mitochondrial from Saccharomyces cerevisiae (strain ATCC 204508 / S288c) (Baker's yeast).